The chain runs to 201 residues: Glycerol-3-phosphate acyltransferase (201 aa).

5 helical membrane passes run 10–30, 60–80, 86–106, 116–136, and 166–186; these read MLIG…GLIL, LAAA…LIAA, AAIA…WIGF, LGVL…AWIV, and ALAA…RANI.

This sequence belongs to the PlsY family. As to quaternary structure, probably interacts with PlsX.

It localises to the cell inner membrane. The catalysed reaction is an acyl phosphate + sn-glycerol 3-phosphate = a 1-acyl-sn-glycero-3-phosphate + phosphate. It functions in the pathway lipid metabolism; phospholipid metabolism. Catalyzes the transfer of an acyl group from acyl-phosphate (acyl-PO(4)) to glycerol-3-phosphate (G3P) to form lysophosphatidic acid (LPA). This enzyme utilizes acyl-phosphate as fatty acyl donor, but not acyl-CoA or acyl-ACP. This is Glycerol-3-phosphate acyltransferase from Brucella melitensis biotype 2 (strain ATCC 23457).